The chain runs to 622 residues: 1-deoxy-D-xylulose-5-phosphate synthase (622 aa).

Thiamine diphosphate-binding positions include His-80 and 121-123 (GHS). Asp-152 is a binding site for Mg(2+). Thiamine diphosphate is bound by residues 153 to 154 (GA), Asn-181, Tyr-288, and Glu-370. Asn-181 lines the Mg(2+) pocket.

This sequence belongs to the transketolase family. DXPS subfamily. Homodimer. The cofactor is Mg(2+). It depends on thiamine diphosphate as a cofactor.

The enzyme catalyses D-glyceraldehyde 3-phosphate + pyruvate + H(+) = 1-deoxy-D-xylulose 5-phosphate + CO2. The protein operates within metabolic intermediate biosynthesis; 1-deoxy-D-xylulose 5-phosphate biosynthesis; 1-deoxy-D-xylulose 5-phosphate from D-glyceraldehyde 3-phosphate and pyruvate: step 1/1. Its function is as follows. Catalyzes the acyloin condensation reaction between C atoms 2 and 3 of pyruvate and glyceraldehyde 3-phosphate to yield 1-deoxy-D-xylulose-5-phosphate (DXP). This chain is 1-deoxy-D-xylulose-5-phosphate synthase, found in Shewanella putrefaciens (strain CN-32 / ATCC BAA-453).